The primary structure comprises 154 residues: 17 kDa surface antigen (154 aa).

The first 19 residues, 1 to 19, serve as a signal peptide directing secretion; that stretch reads MKLLSKIMIIALAASMLQA. Cysteine 20 carries N-palmitoyl cysteine lipidation. Residue cysteine 20 is the site of S-diacylglycerol cysteine attachment.

It belongs to the rickettsiale 17 kDa surface antigen family.

The protein localises to the cell outer membrane. In Rickettsia australis, this protein is 17 kDa surface antigen (omp).